We begin with the raw amino-acid sequence, 298 residues long: uncharacterized protein (298 aa).

An HTH lysR-type domain is found at 1–61 (MDIFISKKMR…TRKDNNISLN (61 aa)). The segment at residues 21 to 40 (IARAAEKIHMTASPFGKSIA) is a DNA-binding region (H-T-H motif).

This sequence belongs to the LysR transcriptional regulatory family.

This is an uncharacterized protein from Escherichia coli (strain K12).